Here is a 405-residue protein sequence, read N- to C-terminus: Glucose-1-phosphate adenylyltransferase 1 (405 aa).

Alpha-D-glucose 1-phosphate-binding positions include Tyr-96, Gly-161, 176 to 177 (EK), and Ser-194.

The protein belongs to the bacterial/plant glucose-1-phosphate adenylyltransferase family. Homotetramer.

It catalyses the reaction alpha-D-glucose 1-phosphate + ATP + H(+) = ADP-alpha-D-glucose + diphosphate. It participates in glycan biosynthesis; glycogen biosynthesis. In terms of biological role, involved in the biosynthesis of ADP-glucose, a building block required for the elongation reactions to produce glycogen. Catalyzes the reaction between ATP and alpha-D-glucose 1-phosphate (G1P) to produce pyrophosphate and ADP-Glc. The polypeptide is Glucose-1-phosphate adenylyltransferase 1 (Vibrio cholerae serotype O1 (strain ATCC 39315 / El Tor Inaba N16961)).